The primary structure comprises 156 residues: ATP synthase subunit b (156 aa).

Residues 1 to 21 (MNVTVTLIGQMVAFGILVWFV) traverse the membrane as a helical segment.

The protein belongs to the ATPase B chain family. F-type ATPases have 2 components, F(1) - the catalytic core - and F(0) - the membrane proton channel. F(1) has five subunits: alpha(3), beta(3), gamma(1), delta(1), epsilon(1). F(0) has three main subunits: a(1), b(2) and c(10-14). The alpha and beta chains form an alternating ring which encloses part of the gamma chain. F(1) is attached to F(0) by a central stalk formed by the gamma and epsilon chains, while a peripheral stalk is formed by the delta and b chains.

The protein localises to the cell inner membrane. Functionally, f(1)F(0) ATP synthase produces ATP from ADP in the presence of a proton or sodium gradient. F-type ATPases consist of two structural domains, F(1) containing the extramembraneous catalytic core and F(0) containing the membrane proton channel, linked together by a central stalk and a peripheral stalk. During catalysis, ATP synthesis in the catalytic domain of F(1) is coupled via a rotary mechanism of the central stalk subunits to proton translocation. Its function is as follows. Component of the F(0) channel, it forms part of the peripheral stalk, linking F(1) to F(0). The protein is ATP synthase subunit b of Nitrosococcus oceani (strain ATCC 19707 / BCRC 17464 / JCM 30415 / NCIMB 11848 / C-107).